The chain runs to 66 residues: Photosystem II reaction center protein J (66 aa).

Residues 36–56 (LWLVATAGGIAVIFVLGIFFY) form a helical membrane-spanning segment.

Belongs to the PsbJ family. PSII is composed of 1 copy each of membrane proteins PsbA, PsbB, PsbC, PsbD, PsbE, PsbF, PsbH, PsbI, PsbJ, PsbK, PsbL, PsbM, PsbT, PsbX, PsbY, Psb30/Ycf12, peripheral proteins PsbO, CyanoQ (PsbQ), PsbU, PsbV and a large number of cofactors. It forms dimeric complexes.

The protein localises to the cellular thylakoid membrane. One of the components of the core complex of photosystem II (PSII). PSII is a light-driven water:plastoquinone oxidoreductase that uses light energy to abstract electrons from H(2)O, generating O(2) and a proton gradient subsequently used for ATP formation. It consists of a core antenna complex that captures photons, and an electron transfer chain that converts photonic excitation into a charge separation. The polypeptide is Photosystem II reaction center protein J (Prochlorococcus marinus (strain MIT 9215)).